Here is a 183-residue protein sequence, read N- to C-terminus: uncharacterized protein (183 aa).

This is an uncharacterized protein from Methanocaldococcus jannaschii (strain ATCC 43067 / DSM 2661 / JAL-1 / JCM 10045 / NBRC 100440) (Methanococcus jannaschii).